We begin with the raw amino-acid sequence, 121 residues long: Small ribosomal subunit protein uS13 (121 aa).

Residues 95-121 form a disordered region; sequence GLPVRGQKTKTNARTRKGKRKTVGAKS.

Belongs to the universal ribosomal protein uS13 family. In terms of assembly, part of the 30S ribosomal subunit. Forms a loose heterodimer with protein S19. Forms two bridges to the 50S subunit in the 70S ribosome.

In terms of biological role, located at the top of the head of the 30S subunit, it contacts several helices of the 16S rRNA. In the 70S ribosome it contacts the 23S rRNA (bridge B1a) and protein L5 of the 50S subunit (bridge B1b), connecting the 2 subunits; these bridges are implicated in subunit movement. Contacts the tRNAs in the A and P-sites. The polypeptide is Small ribosomal subunit protein uS13 (Campylobacter jejuni subsp. jejuni serotype O:23/36 (strain 81-176)).